We begin with the raw amino-acid sequence, 422 residues long: Enolase (422 aa).

Gln162 contacts (2R)-2-phosphoglycerate. Glu204 functions as the Proton donor in the catalytic mechanism. Mg(2+) contacts are provided by Asp241, Glu284, and Asp311. (2R)-2-phosphoglycerate is bound by residues Lys336, Arg365, Ser366, and Lys387. Catalysis depends on Lys336, which acts as the Proton acceptor.

It belongs to the enolase family. Mg(2+) is required as a cofactor.

Its subcellular location is the cytoplasm. It localises to the secreted. The protein localises to the cell surface. It catalyses the reaction (2R)-2-phosphoglycerate = phosphoenolpyruvate + H2O. It participates in carbohydrate degradation; glycolysis; pyruvate from D-glyceraldehyde 3-phosphate: step 4/5. In terms of biological role, catalyzes the reversible conversion of 2-phosphoglycerate (2-PG) into phosphoenolpyruvate (PEP). It is essential for the degradation of carbohydrates via glycolysis. The polypeptide is Enolase (Bartonella tribocorum (strain CIP 105476 / IBS 506)).